We begin with the raw amino-acid sequence, 632 residues long: Extracellular metalloproteinase 2 (632 aa).

A signal peptide spans Met-1–Gly-19. Residues Leu-20–Ser-244 constitute a propeptide that is removed on maturation. The N-linked (GlcNAc...) asparagine glycan is linked to Asn-270. Residue His-429 participates in Zn(2+) binding. Residue Glu-430 is part of the active site. His-433 lines the Zn(2+) pocket.

It belongs to the peptidase M36 family. Requires Zn(2+) as cofactor.

Its subcellular location is the secreted. Secreted metalloproteinase that allows assimilation of proteinaceous substrates and probably acts as a virulence factor. In Arthroderma gypseum (strain ATCC MYA-4604 / CBS 118893) (Microsporum gypseum), this protein is Extracellular metalloproteinase 2 (MEP2).